Consider the following 254-residue polypeptide: Triosephosphate isomerase (254 aa).

12-14 (NWK) lines the substrate pocket. The active-site Electrophile is His99. Residue Glu169 is the Proton acceptor of the active site. Residues Gly175, Ser214, and 235-236 (GG) contribute to the substrate site.

It belongs to the triosephosphate isomerase family. Homodimer.

It localises to the cytoplasm. The catalysed reaction is D-glyceraldehyde 3-phosphate = dihydroxyacetone phosphate. Its pathway is carbohydrate biosynthesis; gluconeogenesis. It functions in the pathway carbohydrate degradation; glycolysis; D-glyceraldehyde 3-phosphate from glycerone phosphate: step 1/1. Functionally, involved in the gluconeogenesis. Catalyzes stereospecifically the conversion of dihydroxyacetone phosphate (DHAP) to D-glyceraldehyde-3-phosphate (G3P). The polypeptide is Triosephosphate isomerase (Bartonella tribocorum (strain CIP 105476 / IBS 506)).